Here is a 662-residue protein sequence, read N- to C-terminus: Polyunsaturated fatty acid lipoxygenase ALOX15 (662 aa).

Residues 2–114 (GLYRIRVSTG…VLSLPEGTGR (113 aa)) enclose the PLAT domain. A Lipoxygenase domain is found at 115 to 662 (TVGEDPQGLF…PSVVENSVAI (548 aa)). Fe cation is bound by residues histidine 360, histidine 365, histidine 540, histidine 544, and isoleucine 662.

This sequence belongs to the lipoxygenase family. As to quaternary structure, interacts with PEBP1; in response to IL13/interleukin-13, prevents the interaction of PEBP1 with RAF1 to activate the ERK signaling cascade. The cofactor is Fe cation. Detected in monocytes and eosinophils (at protein level). Expressed in airway epithelial cells.

The protein localises to the cytoplasm. It localises to the cytosol. It is found in the cell membrane. Its subcellular location is the lipid droplet. The catalysed reaction is (5Z,8Z,11Z,14Z)-eicosatetraenoate + O2 = (12S)-hydroperoxy-(5Z,8Z,10E,14Z)-eicosatetraenoate. It catalyses the reaction (5Z,8Z,11Z,14Z)-eicosatetraenoate + O2 = (15S)-hydroperoxy-(5Z,8Z,11Z,13E)-eicosatetraenoate. It carries out the reaction (9Z,12Z)-octadecadienoate + O2 = (13S)-hydroperoxy-(9Z,11E)-octadecadienoate. The enzyme catalyses (5Z,8Z,11Z,14Z)-eicosatetraenoate + 2 O2 = (14R,15S)-dihydroperoxy-(5Z,8Z,10E,12E)-eicosatetraenoate. The catalysed reaction is (5Z,8Z,11Z,14Z)-eicosatetraenoate + 2 O2 = (8S,15S)-dihydroperoxy-(5Z,9E,11Z,13E)-eicosatetraenoate. It catalyses the reaction (14S,15R)-epoxy-(5Z,8Z,11Z)-eicosatrienoate + O2 = (8S)-hydroperoxy-(14S,15R)-epoxy-(5Z,9E,11Z)-eicosatrienoate. It carries out the reaction (14S,15R)-epoxy-(5Z,8Z,11Z)-eicosatrienoate + O2 = (12S)-hydroperoxy-(14S,15R)-epoxy-(5Z,8Z,10E)-eicosatrienoate. The enzyme catalyses (14R,15S)-epoxy-(5Z,8Z,11Z)-eicosatrienoate + O2 = (5S)-hydroperoxy-(14R,15S)-epoxy-(6E,8Z,11Z)-eicosatrienoate. The catalysed reaction is (14R,15S)-epoxy-(5Z,8Z,11Z)-eicosatrienoate + O2 = (12S)-hydroperoxy-(14R,15S)-epoxy-(5Z,8Z,10E)-eicosatrienoate. It catalyses the reaction (15R)-hydroperoxy-(5Z,8Z,11Z,13E)-eicosatetraenoate = 15-oxo-(5Z,8Z,11Z,13E)-eicosatetraenoate + H2O. It carries out the reaction (15S)-hydroperoxy-(5Z,8Z,11Z,13E)-eicosatetraenoate = (14S,15S)-epoxy-(5Z,8Z,10E,12E)-eicosatetraenoate + H2O. The enzyme catalyses (12S)-hydroperoxy-(5Z,8Z,10E,14Z)-eicosatetraenoate = (8S)-hydroxy-(11S,12S)-epoxy-(5Z,9E,14Z)-eicosatrienoate. The catalysed reaction is (4Z,7Z,10Z,13Z,16Z,19Z)-docosahexaenoate + O2 = (14S)-hydroperoxy-(4Z,7Z,10Z,12E,16Z,19Z)-docosahexaenoate. It catalyses the reaction (4Z,7Z,10Z,13Z,16Z,19Z)-docosahexaenoate + O2 = (17S)-hydroperoxy-(4Z,7Z,10Z,13Z,15E,19Z)-docosahexaenoate. It carries out the reaction (7S)-hydroperoxy-(4Z,8E,10Z,13Z,16Z,19Z)-docosahexaenoate + O2 = (7S,14S)-dihydroperoxy-(4Z,8E,10Z,12E,16Z,19Z)-docosahexaenoate. The enzyme catalyses (7S)-hydroperoxy-(4Z,8E,10Z,13Z,16Z,19Z)-docosahexaenoate + O2 = (7S,17S)-dihydroperoxy-(4Z,8E,10Z,13Z,15E,19Z)-docosahexaenoate. The catalysed reaction is (4Z,7Z,10Z,13Z,16Z,19Z)-docosahexaenoate + O2 = (11S)-hydroperoxy-(4Z,7Z,9E,13Z,16Z,19Z)-docosahexaenoate. It catalyses the reaction (7Z,10Z,13Z,16Z,19Z)-docosapentaenoate + O2 = 14-hydroperoxy-(7Z,10Z,12E,16Z,19Z)-docosapentaenoate. It carries out the reaction (4Z,7Z,10Z,13Z,16Z)-docosapentaenoate + O2 = 14-hydroperoxy-(4Z,7Z,10Z,12E,16Z)-docosapentaenoate. The enzyme catalyses N-(5Z,8Z,11Z,14Z)-eicosatetraenoyl-taurine + O2 = N-(12S)-hydroperoxy-(5Z,8Z,10E,14Z)-eicosatetraenoyl-taurine. The catalysed reaction is N-(5Z,8Z,11Z,14Z)-eicosatetraenoyl-gamma-aminobutanoate + O2 = N-(12S)-hydroperoxy-(5Z,8Z,10E,14Z)-eicosatetraenoyl-gamma-aminobutanoate. It catalyses the reaction N-(5Z,8Z,11Z,14Z)-eicosatetraenoyl-glycine + O2 = N-(12S)-hydroperoxy-(5Z,8Z,10E,14Z)-eicosatetraenoyl-glycine. It carries out the reaction N-(5Z,8Z,11Z,14Z)-eicosatetraenoyl-L-alanine + O2 = N-(12S)-hydroperoxy-(5Z,8Z,10E,14Z)-eicosatetraenoyl-alanine. The enzyme catalyses N-(5Z,8Z,11Z,14Z)-eicosatetraenoyl-taurine + O2 = N-(15S)-hydroperoxy-(5Z,8Z,11Z,13E)-eicosatetraenoyl-taurine. The catalysed reaction is N-(5Z,8Z,11Z,14Z)-eicosatetraenoyl-gamma-aminobutanoate + O2 = N-(15S)-hydroperoxy-(5Z,8Z,11Z,13E)-eicosatetraenoyl-gamma-aminobutanoate. It catalyses the reaction N-(5Z,8Z,11Z,14Z)-eicosatetraenoyl-glycine + O2 = N-(15S)-hydroperoxy-(5Z,8Z,11Z,13E)-eicosatetraenoyl-glycine. It carries out the reaction N-(5Z,8Z,11Z,14Z)-eicosatetraenoyl-L-alanine + O2 = N-(15S)-hydroperoxy-(5Z,8Z,11Z,13E)-eicosatetraenoyl-alanine. It participates in lipid metabolism; hydroperoxy eicosatetraenoic acid biosynthesis. Its activity is regulated as follows. Activity is increased by binding phosphatidylinositol phosphates, especially phosphatidylinositol 3,4-bisphosphate and phosphatidylinositol 4,5-bisphosphate. Inactivated at 37 degrees Celsius by (13S)-hydroperoxy-(9Z,11E)-octadecadienoate. Functionally, non-heme iron-containing dioxygenase that catalyzes the stereo-specific peroxidation of free and esterified polyunsaturated fatty acids generating a spectrum of bioactive lipid mediators. It inserts peroxyl groups at C12 or C15 of arachidonate ((5Z,8Z,11Z,14Z)-eicosatetraenoate) producing both 12-hydroperoxyeicosatetraenoate/12-HPETE and 15-hydroperoxyeicosatetraenoate/15-HPETE. It may then act on 12-HPETE to produce hepoxilins, which may show pro-inflammatory properties. Can also peroxidize linoleate ((9Z,12Z)-octadecadienoate) to 13-hydroperoxyoctadecadienoate/13-HPODE. May participate in the sequential oxidations of DHA ((4Z,7Z,10Z,13Z,16Z,19Z)-docosahexaenoate) to generate specialized pro-resolving mediators (SPMs)like resolvin D5 ((7S,17S)-diHPDHA) and (7S,14S)-diHPDHA, that actively down-regulate the immune response and have anti-aggregation properties with platelets. Can convert epoxy fatty acids to hydroperoxy-epoxides derivatives followed by an intramolecular nucleophilic substitution leading to the formation of monocyclic endoperoxides. Plays an important role during the maintenance of self-tolerance by peroxidizing membrane-bound phosphatidylethanolamine which can then signal the sorting process for clearance of apoptotic cells during inflammation and prevent an autoimmune response. In addition to its role in the immune and inflammatory responses, this enzyme may play a role in epithelial wound healing in the cornea through production of lipoxin A4 (LXA(4)) and docosahexaenoic acid-derived neuroprotectin D1 (NPD1; 10R,17S-HDHA), both lipid autacoids exhibit anti-inflammatory and neuroprotective properties. Furthermore, it may regulate actin polymerization which is crucial for several biological processes such as the phagocytosis of apoptotic cells. It is also implicated in the generation of endogenous ligands for peroxisome proliferator activated receptor (PPAR-gamma), hence modulating macrophage development and function. It may also exert a negative effect on skeletal development by regulating bone mass through this pathway. As well as participates in ER stress and downstream inflammation in adipocytes, pancreatic islets, and liver. Finally, it is also involved in the cellular response to IL13/interleukin-13. The sequence is that of Polyunsaturated fatty acid lipoxygenase ALOX15 from Homo sapiens (Human).